Reading from the N-terminus, the 434-residue chain is Protein phosphatase 2C 56 (434 aa).

The 295-residue stretch at 128-422 (LYGFTSICGR…DNISVVVVDL (295 aa)) folds into the PPM-type phosphatase domain. Residues Asp-177, Asp-261, Ser-262, Asp-347, and Asp-413 each contribute to the Mg(2+) site. A Nuclear localization signal motif is present at residues 423 to 427 (KPRRK).

It belongs to the PP2C family. As to quaternary structure, interacts with SPK1, ATHB-6, CIPK15/PKS3, GPX3, SRK2E/OST1, SRK2D, SRK2I, SCAR1, SCAR2, SCAR3 and SCARL. Binds to the PA released by the phospholipase D alpha 1 (PLDALPHA1) in response to ABA during the stomatal closure regulation. Interacts with ABA-bounded PYR1, PYL1, PYL2, PYL3, PYL4, PYL5, PYL6, PYL7, PYL8, PYL9, PYL10, and with free PYL2, PYL3, PYL4 and PYL13. Binds to RPL12B, CPK21 and CPK23. Binds to MAPKKK18. Interacts with KIN10. Interacts with phosphorylated PYL8/RCAR3. It depends on Mg(2+) as a cofactor. The cofactor is Mn(2+). In terms of tissue distribution, expressed in seeds and seedlings. In roots, confined to lateral root caps and columella cells.

Its subcellular location is the nucleus. The protein resides in the cytoplasm. It localises to the cell membrane. The catalysed reaction is O-phospho-L-seryl-[protein] + H2O = L-seryl-[protein] + phosphate. The enzyme catalyses O-phospho-L-threonyl-[protein] + H2O = L-threonyl-[protein] + phosphate. With respect to regulation, phosphatase activity repressed by oxidized GPX3 and phosphatidic acid (PA). PA is produced by PLD alpha 1 in response to ABA. Repressed by PYR/PYL/RCAR ABA receptors in an ABA-dependent manner. Functionally, key component and repressor of the abscisic acid (ABA) signaling pathway that regulates numerous ABA responses, such as stomatal closure, osmotic water permeability of the plasma membrane (Pos), drought-induced resistance and rhizogenesis, response to glucose, high light stress, seed germination and inhibition of vegetative growth. During the stomatal closure regulation, modulates the inward calcium-channel permeability as well as the actin reorganization in guard cells in response to ABA. Involved in the resistance to the bacterial pathogen Pseudomonas syringae pv. tomato. Controls negatively fibrillin expression that is involved in mediating ABA-induced photoprotection. May be involved in ABA content regulation. Plays a role in the Pro accumulation in response to reduced water availability (low water potential). Required for the ABA negative regulation of the ethylene-induced hyponastic growth. Involved in acquired thermotolerance of root growth and seedling survival. Activates/represses SRK2E/OST1 in response to ABA-dependent stimuli, especially in stomata closure regulation involving SLAC1. Represses MAPKKK18 activity and promotes MAPKKK18 degradation by the proteasome pathway upon abscisic acid (ABA) treatment. Represses KIN10 activity by the specific dephosphorylation of its T-loop Thr-198, leading to a poststress inactivation of SnRK1 signaling. Restricts MAPKKK20 activity by dephosphorylation. The sequence is that of Protein phosphatase 2C 56 from Arabidopsis thaliana (Mouse-ear cress).